The primary structure comprises 223 residues: tRNA (guanine-N(7)-)-methyltransferase (223 aa).

S-adenosyl-L-methionine contacts are provided by E45, E70, and D125. D125 is a catalytic residue. Substrate contacts are provided by residues K129, D161, and 201-204 (TEYE).

This sequence belongs to the class I-like SAM-binding methyltransferase superfamily. TrmB family.

It catalyses the reaction guanosine(46) in tRNA + S-adenosyl-L-methionine = N(7)-methylguanosine(46) in tRNA + S-adenosyl-L-homocysteine. Its pathway is tRNA modification; N(7)-methylguanine-tRNA biosynthesis. Its function is as follows. Catalyzes the formation of N(7)-methylguanine at position 46 (m7G46) in tRNA. The polypeptide is tRNA (guanine-N(7)-)-methyltransferase (Mesoplasma florum (strain ATCC 33453 / NBRC 100688 / NCTC 11704 / L1) (Acholeplasma florum)).